The chain runs to 516 residues: Oxysterol-binding protein-like protein 1 (516 aa).

2 disordered regions span residues 168–240 (PLGK…SQKS) and 459–501 (KQEI…EEGK). Residues 178–187 (SRTTSSQSVA) show a composition bias toward polar residues. A Phosphoserine modification is found at Ser182. The segment covering 197-206 (TSKKKSSKKN) has biased composition (basic residues). Over residues 218–238 (DRSSTAPSTAESNNEHLSSSQ) the composition is skewed to polar residues.

Belongs to the OSBP family.

It localises to the endoplasmic reticulum. The sequence is that of Oxysterol-binding protein-like protein 1 (obp1) from Schizosaccharomyces pombe (strain 972 / ATCC 24843) (Fission yeast).